The chain runs to 233 residues: tRNA (guanine-N(7)-)-methyltransferase (233 aa).

A disordered region spans residues 1–22 (MIDENHPMRAAGNFFGRRHGKP). Residues Glu64, Glu89, Asp116, and Asp138 each contribute to the S-adenosyl-L-methionine site. Asp138 is a catalytic residue. Substrate contacts are provided by residues Lys142, Asp174, and 212–215 (TRYE).

This sequence belongs to the class I-like SAM-binding methyltransferase superfamily. TrmB family.

It catalyses the reaction guanosine(46) in tRNA + S-adenosyl-L-methionine = N(7)-methylguanosine(46) in tRNA + S-adenosyl-L-homocysteine. It participates in tRNA modification; N(7)-methylguanine-tRNA biosynthesis. Catalyzes the formation of N(7)-methylguanine at position 46 (m7G46) in tRNA. This chain is tRNA (guanine-N(7)-)-methyltransferase, found in Brucella melitensis biotype 1 (strain ATCC 23456 / CCUG 17765 / NCTC 10094 / 16M).